We begin with the raw amino-acid sequence, 362 residues long: Outer membrane porin F (362 aa).

The N-terminal stretch at 1–22 is a signal peptide; it reads MMKRNILAVIVPALLVAGTANA.

The protein belongs to the Gram-negative porin family. Homotrimer. Forms mixed heterotrimers with OmpC; other mixed heterotrimers are also probable.

The protein localises to the cell outer membrane. Forms pores that allow passive diffusion of small molecules across the outer membrane. Its function is as follows. (Microbial infection) Is the major receptor for colicin E5. Functionally, (Microbial infection) A mixed OmpC-OmpF heterotrimer is the outer membrane receptor for toxin CdiA-EC536. The chain is Outer membrane porin F (ompF) from Escherichia coli O6:K15:H31 (strain 536 / UPEC).